A 123-amino-acid chain; its full sequence is Aberrant microtubules protein 1 (123 aa).

Functionally, required for normal microtubule organization. The polypeptide is Aberrant microtubules protein 1 (ABM1) (Saccharomyces cerevisiae (strain ATCC 204508 / S288c) (Baker's yeast)).